The chain runs to 193 residues: Imidazoleglycerol-phosphate dehydratase (193 aa).

It belongs to the imidazoleglycerol-phosphate dehydratase family.

It localises to the cytoplasm. The enzyme catalyses D-erythro-1-(imidazol-4-yl)glycerol 3-phosphate = 3-(imidazol-4-yl)-2-oxopropyl phosphate + H2O. The protein operates within amino-acid biosynthesis; L-histidine biosynthesis; L-histidine from 5-phospho-alpha-D-ribose 1-diphosphate: step 6/9. In Methanoculleus marisnigri (strain ATCC 35101 / DSM 1498 / JR1), this protein is Imidazoleglycerol-phosphate dehydratase.